A 902-amino-acid polypeptide reads, in one-letter code: Nitrate reductase [NADPH] (902 aa).

Cys182 is a Mo-molybdopterin binding site. The Cytochrome b5 heme-binding domain occupies 537 to 612 (LPLIFADEVA…LKKYCIGRCS (76 aa)). Heme-binding residues include His572 and His595. Residues 637-751 (RTKVPIVLIS…KGPLGHFTYY (115 aa)) enclose the FAD-binding FR-type domain. FAD contacts are provided by residues 689–692 (RAYT), 708–712 (LIKVY), Phe713, 725–727 (LFS), and Thr778. Residue 872–879 (CMCGPEGM) participates in NADP(+) binding.

It belongs to the nitrate reductase family. As to quaternary structure, homodimer. FAD serves as cofactor. Heme is required as a cofactor. It depends on Mo-molybdopterin as a cofactor.

It catalyses the reaction nitrite + NADP(+) + H2O = nitrate + NADPH + H(+). Nitrate reductase is a key enzyme involved in the first step of nitrate assimilation in plants, fungi and bacteria. The chain is Nitrate reductase [NADPH] (NIAA) from Phytophthora infestans (Potato late blight agent).